The following is a 64-amino-acid chain: Large ribosomal subunit protein bL32 (64 aa).

Over residues 1–16 (MAVQKSRKTRSRRGMR) the composition is skewed to basic residues. A disordered region spans residues 1–64 (MAVQKSRKTR…TPKESYEDEE (64 aa)).

Belongs to the bacterial ribosomal protein bL32 family.

This chain is Large ribosomal subunit protein bL32, found in Coxiella burnetii (strain CbuK_Q154) (Coxiella burnetii (strain Q154)).